The following is a 495-amino-acid chain: Protein FAM83F (495 aa).

The residue at position 2 (A2) is an N-acetylalanine. Residues A2–L294 form a DUF1669 region. S4 carries the post-translational modification Phosphoserine. 2 disordered regions span residues Q341–A362 and P384–S495. Residues P447–S458 show a composition bias toward low complexity. The residue at position 477 (S477) is a Phosphoserine.

Belongs to the FAM83 family. Directly interacts (via DUF1669) with CSNK1A1 and CSNK1A1L.

Its subcellular location is the cell membrane. This is Protein FAM83F (Fam83f) from Mus musculus (Mouse).